Consider the following 351-residue polypeptide: Molybdenum import ATP-binding protein ModC (351 aa).

Residues 1 to 229 form the ABC transporter domain; the sequence is MLQINVKKQL…PIFAPWKGES (229 aa). Residue 31–38 coordinates ATP; sequence GLSGSGKT. Residues 289–351 form the Mop domain; the sequence is QTSIRNILRG…YVQIKAVSVM (63 aa).

Belongs to the ABC transporter superfamily. Molybdate importer (TC 3.A.1.8) family. The complex is composed of two ATP-binding proteins (ModC), two transmembrane proteins (ModB) and a solute-binding protein (ModA).

The protein resides in the cell inner membrane. The enzyme catalyses molybdate(out) + ATP + H2O = molybdate(in) + ADP + phosphate + H(+). In terms of biological role, part of the ABC transporter complex ModABC involved in molybdenum import. Responsible for energy coupling to the transport system. In Haemophilus influenzae (strain ATCC 51907 / DSM 11121 / KW20 / Rd), this protein is Molybdenum import ATP-binding protein ModC.